We begin with the raw amino-acid sequence, 942 residues long: NBPF family member NBPF8 (942 aa).

Residues 89–130 are a coiled coil; the sequence is AEELRQYKVLVHSQERELTQLKEKLQEGRDASRSLNEHLQAL. The tract at residues 161–203 is disordered; it reads KLSPENDEDEDEDVQVEEDEKVQKSSAPREVQKAEESKVPEDS. Over residues 165–180 the composition is skewed to acidic residues; sequence ENDEDEDEDVQVEEDE. Residues 165–259 form the Olduvai 1 domain; that stretch reads ENDEDEDEDV…ECQDALNILS (95 aa). Residues 190 to 201 are compositionally biased toward basic and acidic residues; sequence EVQKAEESKVPE. Residues 339 to 401 adopt a coiled-coil conformation; sequence KSMLRNERQF…LSLNEHLQAL (63 aa). Olduvai domains follow at residues 436–528, 529–617, 620–675, 676–767, 770–843, and 844–904; these read ENDN…HIIP, ENES…ATGP, SREL…VDMD, EIEK…PPCP, SREL…RSKK, and KRRR…RSVF. Disordered stretches follow at residues 451-474 and 528-566; these read EKVQKSSAPREMQKAEEKEVPEDS and PENESDDEEEEEKGPVSPRNLQESEEEEVPQESWDEGYS. Composition is skewed to acidic residues over residues 530–539 and 550–562; these read NESDDEEEEE and ESEEEEVPQESWD. Residues 831–849 show a composition bias toward basic residues; sequence GKGKIRRGRRSKKKRRRGR. Residues 831–863 are disordered; that stretch reads GKGKIRRGRRSKKKRRRGRKEGEEDQNPPCPRL.

Belongs to the NBPF family. Expressed in the mammary gland.

The protein localises to the cytoplasm. The protein is NBPF family member NBPF8 of Homo sapiens (Human).